Here is a 117-residue protein sequence, read N- to C-terminus: Large ribosomal subunit protein bL20 (117 aa).

Belongs to the bacterial ribosomal protein bL20 family.

Functionally, binds directly to 23S ribosomal RNA and is necessary for the in vitro assembly process of the 50S ribosomal subunit. It is not involved in the protein synthesizing functions of that subunit. This is Large ribosomal subunit protein bL20 (rplT) from Rickettsia prowazekii (strain Madrid E).